Here is a 225-residue protein sequence, read N- to C-terminus: MHIHDWPTNERPREKLLARGATALSDAELLAIFVGSGLRGQDAVQTARDLLHRHGPLRPLLDRPAKALERLPGLGPASACKLAAALELAHRHLMSALERGEALSDPPSVGRYFSQRLRARAYEVFAVLFLDNRHRAIAFEELFTGTIDGADIHPREVVRRALLHNAAAVIVGHNHPSGNPEPSEADRAVTKRLLDSLELVDIRLLDHFVIGDGRPVSLAERGWLE.

In terms of domain architecture, MPN spans 102–224; the sequence is ALSDPPSVGR…PVSLAERGWL (123 aa). Zn(2+)-binding residues include histidine 173, histidine 175, and aspartate 186. The JAMM motif motif lies at 173-186; the sequence is HNHPSGNPEPSEAD.

It belongs to the UPF0758 family.

In Xanthomonas oryzae pv. oryzae (strain MAFF 311018), this protein is UPF0758 protein XOO0462.